A 100-amino-acid polypeptide reads, in one-letter code: Large ribosomal subunit protein uL23 (100 aa).

The protein belongs to the universal ribosomal protein uL23 family. As to quaternary structure, part of the 50S ribosomal subunit. Contacts protein L29, and trigger factor when it is bound to the ribosome.

In terms of biological role, one of the early assembly proteins it binds 23S rRNA. One of the proteins that surrounds the polypeptide exit tunnel on the outside of the ribosome. Forms the main docking site for trigger factor binding to the ribosome. This Mycolicibacterium paratuberculosis (strain ATCC BAA-968 / K-10) (Mycobacterium paratuberculosis) protein is Large ribosomal subunit protein uL23.